We begin with the raw amino-acid sequence, 150 residues long: uncharacterized protein (150 aa).

This is an uncharacterized protein from Aquifex aeolicus (strain VF5).